A 703-amino-acid chain; its full sequence is Elongation factor G 1 (703 aa).

Positions 8–290 (ERYRNIGISA…AVIDFLPSPV (283 aa)) constitute a tr-type G domain. GTP is bound by residues 17 to 24 (AHIDAGKT), 88 to 92 (DTPGH), and 142 to 145 (NKMD).

This sequence belongs to the TRAFAC class translation factor GTPase superfamily. Classic translation factor GTPase family. EF-G/EF-2 subfamily.

It localises to the cytoplasm. Its function is as follows. Catalyzes the GTP-dependent ribosomal translocation step during translation elongation. During this step, the ribosome changes from the pre-translocational (PRE) to the post-translocational (POST) state as the newly formed A-site-bound peptidyl-tRNA and P-site-bound deacylated tRNA move to the P and E sites, respectively. Catalyzes the coordinated movement of the two tRNA molecules, the mRNA and conformational changes in the ribosome. This Cupriavidus metallidurans (strain ATCC 43123 / DSM 2839 / NBRC 102507 / CH34) (Ralstonia metallidurans) protein is Elongation factor G 1.